We begin with the raw amino-acid sequence, 340 residues long: GTP 3',8-cyclase (340 aa).

The Radical SAM core domain occupies 8–227; the sequence is KLGRPIRDLR…DMIESHFDIE (220 aa). R17 lines the GTP pocket. [4Fe-4S] cluster contacts are provided by C24 and C28. Y30 lines the S-adenosyl-L-methionine pocket. A [4Fe-4S] cluster-binding site is contributed by C31. Position 71 (R71) interacts with GTP. Residue G75 participates in S-adenosyl-L-methionine binding. T102 lines the GTP pocket. S126 lines the S-adenosyl-L-methionine pocket. K163 is a GTP binding site. An S-adenosyl-L-methionine-binding site is contributed by M197. The [4Fe-4S] cluster site is built by C261 and C264. GTP is bound at residue 266–268; it reads RAR. C278 is a binding site for [4Fe-4S] cluster.

Belongs to the radical SAM superfamily. MoaA family. In terms of assembly, monomer and homodimer. [4Fe-4S] cluster serves as cofactor.

It catalyses the reaction GTP + AH2 + S-adenosyl-L-methionine = (8S)-3',8-cyclo-7,8-dihydroguanosine 5'-triphosphate + 5'-deoxyadenosine + L-methionine + A + H(+). It functions in the pathway cofactor biosynthesis; molybdopterin biosynthesis. Catalyzes the cyclization of GTP to (8S)-3',8-cyclo-7,8-dihydroguanosine 5'-triphosphate. This is GTP 3',8-cyclase from Staphylococcus haemolyticus (strain JCSC1435).